Reading from the N-terminus, the 153-residue chain is D-aminoacyl-tRNA deacylase (153 aa).

The Gly-cisPro motif, important for rejection of L-amino acids motif lies at 137-138 (GP).

It belongs to the DTD family. As to quaternary structure, homodimer.

Its subcellular location is the cytoplasm. It carries out the reaction glycyl-tRNA(Ala) + H2O = tRNA(Ala) + glycine + H(+). The catalysed reaction is a D-aminoacyl-tRNA + H2O = a tRNA + a D-alpha-amino acid + H(+). An aminoacyl-tRNA editing enzyme that deacylates mischarged D-aminoacyl-tRNAs. Also deacylates mischarged glycyl-tRNA(Ala), protecting cells against glycine mischarging by AlaRS. Acts via tRNA-based rather than protein-based catalysis; rejects L-amino acids rather than detecting D-amino acids in the active site. By recycling D-aminoacyl-tRNA to D-amino acids and free tRNA molecules, this enzyme counteracts the toxicity associated with the formation of D-aminoacyl-tRNA entities in vivo and helps enforce protein L-homochirality. This Dehalococcoides mccartyi (strain ATCC BAA-2100 / JCM 16839 / KCTC 5957 / BAV1) protein is D-aminoacyl-tRNA deacylase.